Consider the following 551-residue polypeptide: Electron transfer flavoprotein-ubiquinone oxidoreductase (551 aa).

Position 10 to 24 (10 to 24) interacts with FAD; it reads VVIVGAGPAGLSAAC. [4Fe-4S] cluster contacts are provided by C496, C520, C523, and C526. In terms of domain architecture, 4Fe-4S ferredoxin-type spans 511 to 540; that stretch reads KRFQINAQNCVHCKTCDIKDPAQNITWVAP.

The protein belongs to the ETF-QO/FixC family. [4Fe-4S] cluster is required as a cofactor. Requires FAD as cofactor.

The enzyme catalyses a ubiquinone + reduced [electron-transfer flavoprotein] = a ubiquinol + oxidized [electron-transfer flavoprotein] + H(+). Functionally, accepts electrons from ETF and reduces ubiquinone. The polypeptide is Electron transfer flavoprotein-ubiquinone oxidoreductase (Pseudomonas aeruginosa (strain ATCC 15692 / DSM 22644 / CIP 104116 / JCM 14847 / LMG 12228 / 1C / PRS 101 / PAO1)).